An 868-amino-acid chain; its full sequence is Alanine--tRNA ligase (868 aa).

4 residues coordinate Zn(2+): histidine 555, histidine 559, cysteine 657, and histidine 661. The tract at residues 828–847 (SQVGGKGGGRPDMAQAGGSE) is disordered.

This sequence belongs to the class-II aminoacyl-tRNA synthetase family. Requires Zn(2+) as cofactor.

Its subcellular location is the cytoplasm. It carries out the reaction tRNA(Ala) + L-alanine + ATP = L-alanyl-tRNA(Ala) + AMP + diphosphate. In terms of biological role, catalyzes the attachment of alanine to tRNA(Ala) in a two-step reaction: alanine is first activated by ATP to form Ala-AMP and then transferred to the acceptor end of tRNA(Ala). Also edits incorrectly charged Ser-tRNA(Ala) and Gly-tRNA(Ala) via its editing domain. The chain is Alanine--tRNA ligase from Pseudoalteromonas translucida (strain TAC 125).